A 448-amino-acid chain; its full sequence is tRNA modification GTPase MnmE (448 aa).

(6S)-5-formyl-5,6,7,8-tetrahydrofolate is bound by residues R24, E81, and K120. Residues 216 to 373 (GLNVVLVGAP…LKRTLLREAG (158 aa)) enclose the TrmE-type G domain. Residue N226 coordinates K(+). Residues 226–231 (NVGKSS), 245–251 (TDIAGTT), and 270–273 (DTAG) contribute to the GTP site. S230 provides a ligand contact to Mg(2+). Residues T245, I247, and T250 each coordinate K(+). T251 contributes to the Mg(2+) binding site. A (6S)-5-formyl-5,6,7,8-tetrahydrofolate-binding site is contributed by K448.

The protein belongs to the TRAFAC class TrmE-Era-EngA-EngB-Septin-like GTPase superfamily. TrmE GTPase family. Homodimer. Heterotetramer of two MnmE and two MnmG subunits. Requires K(+) as cofactor.

The protein resides in the cytoplasm. Exhibits a very high intrinsic GTPase hydrolysis rate. Involved in the addition of a carboxymethylaminomethyl (cmnm) group at the wobble position (U34) of certain tRNAs, forming tRNA-cmnm(5)s(2)U34. The sequence is that of tRNA modification GTPase MnmE from Neisseria meningitidis serogroup C / serotype 2a (strain ATCC 700532 / DSM 15464 / FAM18).